Reading from the N-terminus, the 359-residue chain is Anhydro-N-acetylmuramic acid kinase (359 aa).

ATP is bound at residue 12 to 19 (GTSLDGVD).

It belongs to the anhydro-N-acetylmuramic acid kinase family.

It catalyses the reaction 1,6-anhydro-N-acetyl-beta-muramate + ATP + H2O = N-acetyl-D-muramate 6-phosphate + ADP + H(+). It functions in the pathway amino-sugar metabolism; 1,6-anhydro-N-acetylmuramate degradation. It participates in cell wall biogenesis; peptidoglycan recycling. Its function is as follows. Catalyzes the specific phosphorylation of 1,6-anhydro-N-acetylmuramic acid (anhMurNAc) with the simultaneous cleavage of the 1,6-anhydro ring, generating MurNAc-6-P. Is required for the utilization of anhMurNAc either imported from the medium or derived from its own cell wall murein, and thus plays a role in cell wall recycling. The protein is Anhydro-N-acetylmuramic acid kinase of Sulfurovum sp. (strain NBC37-1).